Reading from the N-terminus, the 422-residue chain is UDP-N-acetylglucosamine 1-carboxyvinyltransferase (422 aa).

Residue 22–23 (KN) participates in phosphoenolpyruvate binding. A UDP-N-acetyl-alpha-D-glucosamine-binding site is contributed by Arg-92. Cys-116 serves as the catalytic Proton donor. 2-(S-cysteinyl)pyruvic acid O-phosphothioketal is present on Cys-116. Residues 121-125 (RPVDL), Asp-307, and Leu-329 contribute to the UDP-N-acetyl-alpha-D-glucosamine site.

Belongs to the EPSP synthase family. MurA subfamily.

It is found in the cytoplasm. The catalysed reaction is phosphoenolpyruvate + UDP-N-acetyl-alpha-D-glucosamine = UDP-N-acetyl-3-O-(1-carboxyvinyl)-alpha-D-glucosamine + phosphate. Its pathway is cell wall biogenesis; peptidoglycan biosynthesis. In terms of biological role, cell wall formation. Adds enolpyruvyl to UDP-N-acetylglucosamine. This is UDP-N-acetylglucosamine 1-carboxyvinyltransferase from Aliarcobacter butzleri (strain RM4018) (Arcobacter butzleri).